The primary structure comprises 236 residues: Hydantoin racemase (236 aa).

As to quaternary structure, homohexamer, homoheptamer or homooctamer.

The enzyme catalyses a D-5-monosubstituted hydantoin = a L-5-monosubstituted hydantoin. It carries out the reaction D-5-benzylhydantoin = L-5-benzylhydantoin. With respect to regulation, completely inhibited by HgCl(2) and iodoacetamide. Stimulated by dithiothreitol. Involved in the asymmetric conversion of racemic 5-substituted hydantoins to the corresponding L-amino acids. Catalyzes the racemization via enolization of D- and L-5-monosubstituted hydantoins. It shows preference for hydantoins with arylalkyl side chains such as 5-benzylhydantoin (BH) and, to a lesser extent, 5-(3-indolylmethylene)hydantoin (IMH). In Paenarthrobacter aurescens (Arthrobacter aurescens), this protein is Hydantoin racemase.